Reading from the N-terminus, the 198-residue chain is MAERKGEIIRKTNETSVSVRVDIDGTGKSKISTGVGFFDHMLDQLSRHSLIDMDIEVQGDLHIDDHHTVEDTGIAIGQAIAKALGDRRGITRYASLDLAMDETMTKAAVDISGRPFLVWNVNFSAPKIGTFDTELVREFFQALAQNAGITLHILNHYGANNHHIAETCFKAVARVLRTATEIDPRQAGRVPSTKGMLA.

This sequence belongs to the imidazoleglycerol-phosphate dehydratase family.

It localises to the cytoplasm. The enzyme catalyses D-erythro-1-(imidazol-4-yl)glycerol 3-phosphate = 3-(imidazol-4-yl)-2-oxopropyl phosphate + H2O. It functions in the pathway amino-acid biosynthesis; L-histidine biosynthesis; L-histidine from 5-phospho-alpha-D-ribose 1-diphosphate: step 6/9. In Agrobacterium fabrum (strain C58 / ATCC 33970) (Agrobacterium tumefaciens (strain C58)), this protein is Imidazoleglycerol-phosphate dehydratase.